Consider the following 118-residue polypeptide: Large ribosomal subunit protein uL18 (118 aa).

The segment at 1-20 (MISKPDKNKKRQRRHARVRS) is disordered. Over residues 7 to 20 (KNKKRQRRHARVRS) the composition is skewed to basic residues.

This sequence belongs to the universal ribosomal protein uL18 family. As to quaternary structure, part of the 50S ribosomal subunit; part of the 5S rRNA/L5/L18/L25 subcomplex. Contacts the 5S and 23S rRNAs.

Functionally, this is one of the proteins that bind and probably mediate the attachment of the 5S RNA into the large ribosomal subunit, where it forms part of the central protuberance. This Pediococcus pentosaceus (strain ATCC 25745 / CCUG 21536 / LMG 10740 / 183-1w) protein is Large ribosomal subunit protein uL18.